Here is a 520-residue protein sequence, read N- to C-terminus: Amphoterin-induced protein 2 (520 aa).

The first 37 residues, 1–37, serve as a signal peptide directing secretion; sequence MSLRFHTLPTLPRAVKPGCRELLCLLVIAVMVSPSSS. The 30-residue stretch at 38 to 67 folds into the LRRNT domain; it reads GLCPTACICATDIVSCTNKNLSKVPGNLFR. Residues 38 to 398 lie on the Extracellular side of the membrane; it reads GLCPTACICA…SHHAHEAFNT (361 aa). Disulfide bonds link cysteine 40/cysteine 46 and cysteine 44/cysteine 53. A glycan (N-linked (GlcNAc...) asparagine) is linked at asparagine 57. 6 LRR repeats span residues 68-89, 93-114, 117-138, 141-162, 165-186, and 192-213; these read LIKRLDLSYNRIGLLDADWIPV, KLSTLIVRHNNITSISTGSFST, NLKCLDLSSNRLKSVKSAMFQE, VLEVLLLYNNHISYLDPAAFGG, HLQKLYLSGNFLTKFPMDLYVG, and DLTFLDVSYNQIASIPMHHINL. Asparagine 103 is a glycosylation site (N-linked (GlcNAc...) asparagine). The 57-residue stretch at 227-283 folds into the LRRCT domain; sequence NPFVCDCSLYSLLTFWYRRHFNSVTDFKHDYTCRLWLDSRHSHQLLLLQDSFLNCSH. 2 disulfides stabilise this stretch: cysteine 231-cysteine 259 and cysteine 233-cysteine 281. Asparagine 280, asparagine 287, asparagine 344, asparagine 372, asparagine 380, asparagine 383, and asparagine 387 each carry an N-linked (GlcNAc...) asparagine glycan. An Ig-like C2-type domain is found at 288-378; the sequence is GSFHALGFIH…RLLNETVDIM (91 aa). Cysteines 309 and 362 form a disulfide. The chain crosses the membrane as a helical span at residues 399 to 419; the sequence is AFTTLAACVVSIVLVLLYLYL. The Cytoplasmic segment spans residues 420 to 520; that stretch reads TPCPCKCRDK…FSDTPFVAST (101 aa). Disordered regions lie at residues 437–458 and 498–520; these read QSNAHSSILSPGPTRDASAEDR and SRAKSDSDSVNSVFSDTPFVAST.

This sequence belongs to the immunoglobulin superfamily. AMIGO family. Binds itself as well as AMIGO1 and AMIGO3. As to expression, highest levels in the lung. High levels in cerebellar granule neurons and Purkinje cells. Also in pyramidal cells between CA1 and CA3 regions of the hippocampus and granule cells of the dentate gyrus.

The protein localises to the cell membrane. Its subcellular location is the nucleus. Functionally, required for depolarization-dependent survival of cultured cerebellar granule neurons. May mediate homophilic as well as heterophilic cell-cell interaction with AMIGO1 or AMIGO3. May contribute to signal transduction through its intracellular domain. This is Amphoterin-induced protein 2 from Rattus norvegicus (Rat).